The chain runs to 500 residues: Cytochrome P450 11B3, mitochondrial (500 aa).

Residues 1 to 24 (MALRVTADVWLARPWQCLHRTRAL) constitute a mitochondrion transit peptide. Residue cysteine 447 participates in heme binding.

It belongs to the cytochrome P450 family. Heme serves as cofactor. In terms of tissue distribution, expressed in the adrenal cortex and in different brain tissues, including hippocampus, hypothalamus, cerebellum, cerebral cortex, and midbrain.

The protein resides in the mitochondrion membrane. The enzyme catalyses a steroid + 2 reduced [adrenodoxin] + O2 + 2 H(+) = an 11beta-hydroxysteroid + 2 oxidized [adrenodoxin] + H2O. It carries out the reaction 21-hydroxyprogesterone + 2 reduced [adrenodoxin] + O2 + 2 H(+) = corticosterone + 2 oxidized [adrenodoxin] + H2O. The catalysed reaction is 21-hydroxyprogesterone + 2 reduced [adrenodoxin] + O2 + 2 H(+) = 18-hydroxy-11-deoxycorticosterone + 2 oxidized [adrenodoxin] + H2O. It catalyses the reaction 21-hydroxyprogesterone + 2 reduced [adrenodoxin] + O2 + 2 H(+) = 19-hydroxy-11-deoxycorticosterone + 2 oxidized [adrenodoxin] + H2O. A cytochrome P450 monooxygenase involved in the biosynthesis of adrenal corticoids. Catalyzes the hydroxylation of steroids at 11beta, 18- or 19-positions, with preferred regioselectivity at 11beta and 18. Converts 11-deoxycorticosterone into corticosterone, 18-hydroxy-11-deoxycorticosterone, and/or 19-hydroxy-11-deoxycorticosterone, but not to 18-hydroxycorticosterone or aldosterone. Mechanistically, uses molecular oxygen inserting one oxygen atom into a substrate for hydroxylation and reducing the second into a water molecule. Two electrons are provided by NADPH via a two-protein mitochondrial transfer system comprising flavoprotein FDXR (adrenodoxin/ferredoxin reductase) and nonheme iron-sulfur protein FDX1 or FDX2 (adrenodoxin/ferredoxin). The sequence is that of Cytochrome P450 11B3, mitochondrial (Cyp11b3) from Rattus norvegicus (Rat).